The following is a 503-amino-acid chain: Probable DNA ligase (503 aa).

Position 210 (Glu210) interacts with ATP. Lys212 (N6-AMP-lysine intermediate) is an active-site residue. 6 residues coordinate ATP: Arg217, Arg232, Glu261, Phe296, Arg367, and Lys373.

This sequence belongs to the ATP-dependent DNA ligase family. Mg(2+) is required as a cofactor.

The enzyme catalyses ATP + (deoxyribonucleotide)n-3'-hydroxyl + 5'-phospho-(deoxyribonucleotide)m = (deoxyribonucleotide)n+m + AMP + diphosphate.. DNA ligase that seals nicks in double-stranded DNA during DNA replication, DNA recombination and DNA repair. In Rhodococcus jostii (strain RHA1), this protein is Probable DNA ligase.